We begin with the raw amino-acid sequence, 266 residues long: Cytochrome c oxidase subunit 2 (266 aa).

The Mitochondrial intermembrane segment spans residues 1-43 (MTITNYINNQFTFLDMAEPWQLGFQDPATPVMEGIINFHHDLM). The helical transmembrane segment at 44 to 64 (FFLISIVVFVCWMLFRVITLF) threads the bilayer. Over 65-82 (DEKKNKIPATVVHGATIE) the chain is Mitochondrial matrix. Residues 83 to 103 (IIWTSIPALILLTVAVPSFAL) traverse the membrane as a helical segment. Topologically, residues 104–266 (LYSMDEVIDP…NVXLIKFYGI (163 aa)) are mitochondrial intermembrane. 6 residues coordinate Cu cation: H186, C221, E223, C225, H229, and M232. E223 is a Mg(2+) binding site.

This sequence belongs to the cytochrome c oxidase subunit 2 family. As to quaternary structure, component of the cytochrome c oxidase (complex IV, CIV), a multisubunit enzyme composed of a catalytic core of 3 subunits and several supernumerary subunits. The complex exists as a monomer or a dimer and forms supercomplexes (SCs) in the inner mitochondrial membrane with ubiquinol-cytochrome c oxidoreductase (cytochrome b-c1 complex, complex III, CIII). It depends on Cu cation as a cofactor.

The protein localises to the mitochondrion inner membrane. It carries out the reaction 4 Fe(II)-[cytochrome c] + O2 + 8 H(+)(in) = 4 Fe(III)-[cytochrome c] + 2 H2O + 4 H(+)(out). Its function is as follows. Component of the cytochrome c oxidase, the last enzyme in the mitochondrial electron transport chain which drives oxidative phosphorylation. The respiratory chain contains 3 multisubunit complexes succinate dehydrogenase (complex II, CII), ubiquinol-cytochrome c oxidoreductase (cytochrome b-c1 complex, complex III, CIII) and cytochrome c oxidase (complex IV, CIV), that cooperate to transfer electrons derived from NADH and succinate to molecular oxygen, creating an electrochemical gradient over the inner membrane that drives transmembrane transport and the ATP synthase. Cytochrome c oxidase is the component of the respiratory chain that catalyzes the reduction of oxygen to water. Electrons originating from reduced cytochrome c in the intermembrane space (IMS) are transferred via the dinuclear copper A center (CU(A)) of subunit 2 and heme A of subunit 1 to the active site in subunit 1, a binuclear center (BNC) formed by heme A3 and copper B (CU(B)). The BNC reduces molecular oxygen to 2 water molecules using 4 electrons from cytochrome c in the IMS and 4 protons from the mitochondrial matrix. The sequence is that of Cytochrome c oxidase subunit 2 (COX2) from Phytophthora megasperma (Potato pink rot fungus).